Reading from the N-terminus, the 593-residue chain is DNA primase (593 aa).

A CHC2-type zinc finger spans residues 40–64 (CPFHHEKTPSFTVSQKKQFYHCFGC). Residues 260–342 (KQLLVVEGYM…GRQLKFIFLP (83 aa)) form the Toprim domain. 3 residues coordinate Mg(2+): Glu266, Asp310, and Asp312.

It belongs to the DnaG primase family. Monomer. Interacts with DnaB. Zn(2+) serves as cofactor. It depends on Mg(2+) as a cofactor.

It carries out the reaction ssDNA + n NTP = ssDNA/pppN(pN)n-1 hybrid + (n-1) diphosphate.. Its function is as follows. RNA polymerase that catalyzes the synthesis of short RNA molecules used as primers for DNA polymerase during DNA replication. This Haemophilus influenzae (strain ATCC 51907 / DSM 11121 / KW20 / Rd) protein is DNA primase.